Consider the following 268-residue polypeptide: 4-hydroxy-tetrahydrodipicolinate reductase (268 aa).

NAD(+) is bound by residues 7–12 (GAGGRM) and E33. R34 is an NADP(+) binding site. NAD(+) contacts are provided by residues 97 to 99 (GTT) and 121 to 124 (SGNM). The Proton donor/acceptor role is filled by H155. Residue H156 participates in (S)-2,3,4,5-tetrahydrodipicolinate binding. The active-site Proton donor is K159. (S)-2,3,4,5-tetrahydrodipicolinate is bound at residue 165 to 166 (GT).

Belongs to the DapB family.

It is found in the cytoplasm. It carries out the reaction (S)-2,3,4,5-tetrahydrodipicolinate + NAD(+) + H2O = (2S,4S)-4-hydroxy-2,3,4,5-tetrahydrodipicolinate + NADH + H(+). The catalysed reaction is (S)-2,3,4,5-tetrahydrodipicolinate + NADP(+) + H2O = (2S,4S)-4-hydroxy-2,3,4,5-tetrahydrodipicolinate + NADPH + H(+). It participates in amino-acid biosynthesis; L-lysine biosynthesis via DAP pathway; (S)-tetrahydrodipicolinate from L-aspartate: step 4/4. Its function is as follows. Catalyzes the conversion of 4-hydroxy-tetrahydrodipicolinate (HTPA) to tetrahydrodipicolinate. The protein is 4-hydroxy-tetrahydrodipicolinate reductase of Brucella abortus (strain 2308).